Consider the following 77-residue polypeptide: MLKLKDIAMALLEATGFSNINDFNIFSYMKSKNVDVDLIKVLVEHGFDLSVKCENHRSVIENYVMTMILFLKLLICS.

This is an uncharacterized protein from Vaccinia virus (strain Western Reserve) (VACV).